The primary structure comprises 144 residues: Na(+)/H(+) antiporter subunit B (144 aa).

4 helical membrane passes run 9–31, 41–58, 75–97, and 117–139; these read VLLH…YLFF, FIGG…YLGF, IAFG…DPYL, and ALPF…ILTI.

Belongs to the CPA3 antiporters (TC 2.A.63) subunit B family. In terms of assembly, forms a heterooligomeric complex that consists of seven subunits: MrpA, MrpB, MrpC, MrpD, MrpE, MrpF and MrpG.

Its subcellular location is the cell membrane. In terms of biological role, mnh complex is a Na(+)Li(+)/H(+) antiporter involved in Na(+) and/or Li(+) excretion and Na(+) resistance. Na(+)/H(+) antiport consumes a transmembrane electrical potential, and is thus inferred to be electrogenic. Does not transport K(+), Ca(2+) or Mg(2+). The protein is Na(+)/H(+) antiporter subunit B (mrpB) of Alkalihalophilus pseudofirmus (strain ATCC BAA-2126 / JCM 17055 / OF4) (Bacillus pseudofirmus).